We begin with the raw amino-acid sequence, 1193 residues long: MPALWLGCCLCFSLLLPAARATSRREVCDCNGKSRQCIFDRELHRQTGNGFRCLNCNDNTDGIHCEKCKNGFYRHRERDRCLPCNCNSKGSLSARCDNSGRCSCKPGVTGARCDRCLPGFHMLTDAGCTQDQRLLDSKCDCDPAGIAGPCDAGRCVCKPAVTGERCDRCRSGYYNLDGGNPEGCTQCFCYGHSASCRSSAEYSVHKITSTFHQDVDGWKAVQRNGSPAKLQWSQRHQDVFSSAQRLDPVYFVAPAKFLGNQQVSYGQSLSFDYRVDRGGRHPSAHDVILEGAGLRITAPLMPLGKTLPCGLTKTYTFRLNEHPSNNWSPQLSYFEYRRLLRNLTALRIRATYGEYSTGYIDNVTLISARPVSGAPAPWVEQCICPVGYKGQFCQDCASGYKRDSARLGPFGTCIPCNCQGGGACDPDTGDCYSGDENPDIECADCPIGFYNDPHDPRSCKPCPCHNGFSCSVMPETEEVVCNNCPPGVTGARCELCADGYFGDPFGEHGPVRPCQPCQCNNNVDPSASGNCDRLTGRCLKCIHNTAGIYCDQCKAGYFGDPLAPNPADKCRACNCNPMGSEPVGCRSDGTCVCKPGFGGPNCEHGAFSCPACYNQVKIQMDQFMQQLQRMEALISKAQGGDGVVPDTELEGRMQQAEQALQDILRDAQISEGASRSLGLQLAKVRSQENSYQSRLDDLKMTVERVRALGSQYQNRVRDTHRLITQMQLSLAESEASLGNTNIPASDHYVGPNGFKSLAQEATRLAESHVESASNMEQLTRETEDYSKQALSLVRKALHEGVGSGSGSPDGAVVQGLVEKLEKTKSLAQQLTREATQAEIEADRSYQHSLRLLDSVSRLQGVSDQSFQVEEAKRIKQKADSLSSLVTRHMDEFKRTQKNLGNWKEEAQQLLQNGKSGREKSDQLLSRANLAKSRAQEALSMGNATFYEVESILKNLREFDLQVDNRKAEAEEAMKRLSYISQKVSDASDKTQQAERALGSAAADAQRAKNGAGEALEISSEIEQEIGSLNLEANVTADGALAMEKGLASLKSEMREVEGELERKELEFDTNMDAVQMVITEAQKVDTRAKNAGVTIQDTLNTLDGLLHLMDQPLSVDEEGLVLLEQKLSRAKTQINSQLRPMMSELEERARQQRGHLHLLETSIDGILADVKNLENIRDNLPPGCYNTQALEQQ.

The signal sequence occupies residues 1 to 21 (MPALWLGCCLCFSLLLPAARA). Disulfide bonds link Cys-28/Cys-37, Cys-30/Cys-53, Cys-56/Cys-65, Cys-68/Cys-81, Cys-84/Cys-96, Cys-86/Cys-102, Cys-104/Cys-113, Cys-116/Cys-128, Cys-139/Cys-150, Cys-141/Cys-155, Cys-157/Cys-166, and Cys-169/Cys-184. 3 Laminin EGF-like domains span residues 28–83 (CDCN…RCLP), 84–130 (CNCN…GCTQ), and 139–186 (CDCD…GCTQ). Positions 187-196 (CFCYGHSASC) constitute a Laminin EGF-like 4; first part domain. The 169-residue stretch at 213 to 381 (QDVDGWKAVQ…SGAPAPWVEQ (169 aa)) folds into the Laminin IV type A domain. Residues Asn-342 and Asn-362 are each glycosylated (N-linked (GlcNAc...) asparagine). The 34-residue stretch at 382–415 (CICPVGYKGQFCQDCASGYKRDSARLGPFGTCIP) folds into the Laminin EGF-like 4; second part domain. 3 consecutive Laminin EGF-like domains span residues 416 to 461 (CNCQ…SCKP), 462 to 516 (CPCH…PCQP), and 517 to 572 (CQCN…KCRA). 11 disulfides stabilise this stretch: Cys-462/Cys-470, Cys-464/Cys-481, Cys-484/Cys-493, Cys-496/Cys-514, Cys-517/Cys-531, Cys-519/Cys-538, Cys-541/Cys-550, Cys-553/Cys-570, Cys-573/Cys-585, Cys-575/Cys-591, and Cys-593/Cys-602. A Laminin EGF-like 8; truncated domain is found at 573–602 (CNCNPMGSEPVGCRSDGTCVCKPGFGGPNC). The interval 603-1193 (EHGAFSCPAC…CYNTQALEQQ (591 aa)) is domain II and I. Positions 611–718 (ACYNQVKIQM…GSQYQNRVRD (108 aa)) form a coiled coil. 2 O-linked (Xyl...) (chondroitin sulfate) serine glycosylation sites follow: Ser-803 and Ser-805. Coiled coils occupy residues 811–1076 (AVVQ…AVQM) and 1117–1193 (EEGL…LEQQ). N-linked (GlcNAc...) asparagine glycosylation is found at Asn-942 and Asn-1033.

As to quaternary structure, laminin is a complex glycoprotein, consisting of three different polypeptide chains (alpha, beta, gamma), which are bound to each other by disulfide bonds into a cross-shaped molecule comprising one long and three short arms with globules at each end. Gamma-2 is a subunit of laminin-5 (laminin-332 or epiligrin/kalinin/nicein). In terms of processing, O-glycosylated; contains chondroitin sulfate (CS). CS attachment is on either Ser-803 or Ser-805. In terms of tissue distribution, the large variant is expressed only in specific epithelial cells of embryonic and neonatal tissues. In 17-week old embryo the small variant is found in cerebral cortex, lung, and distal tubes of kidney, but not in epithelia except for distal tubuli.

It localises to the secreted. Its subcellular location is the extracellular space. The protein localises to the extracellular matrix. The protein resides in the basement membrane. Binding to cells via a high affinity receptor, laminin is thought to mediate the attachment, migration and organization of cells into tissues during embryonic development by interacting with other extracellular matrix components. Ladsin exerts cell-scattering activity toward a wide variety of cells, including epithelial, endothelial, and fibroblastic cells. The polypeptide is Laminin subunit gamma-2 (LAMC2) (Homo sapiens (Human)).